Reading from the N-terminus, the 188-residue chain is Acireductone dioxygenase (188 aa).

Fe(2+) contacts are provided by H97, H99, E103, and H141. H97, H99, E103, and H141 together coordinate Ni(2+).

It belongs to the acireductone dioxygenase (ARD) family. In terms of assembly, monomer. Fe(2+) is required as a cofactor. Ni(2+) serves as cofactor.

The catalysed reaction is 1,2-dihydroxy-5-(methylsulfanyl)pent-1-en-3-one + O2 = 3-(methylsulfanyl)propanoate + CO + formate + 2 H(+). It catalyses the reaction 1,2-dihydroxy-5-(methylsulfanyl)pent-1-en-3-one + O2 = 4-methylsulfanyl-2-oxobutanoate + formate + 2 H(+). It functions in the pathway amino-acid biosynthesis; L-methionine biosynthesis via salvage pathway; L-methionine from S-methyl-5-thio-alpha-D-ribose 1-phosphate: step 5/6. In terms of biological role, catalyzes 2 different reactions between oxygen and the acireductone 1,2-dihydroxy-3-keto-5-methylthiopentene (DHK-MTPene) depending upon the metal bound in the active site. Fe-containing acireductone dioxygenase (Fe-ARD) produces formate and 2-keto-4-methylthiobutyrate (KMTB), the alpha-ketoacid precursor of methionine in the methionine recycle pathway. Ni-containing acireductone dioxygenase (Ni-ARD) produces methylthiopropionate, carbon monoxide and formate, and does not lie on the methionine recycle pathway. In Xylella fastidiosa (strain 9a5c), this protein is Acireductone dioxygenase.